Here is a 275-residue protein sequence, read N- to C-terminus: Formamidopyrimidine-DNA glycosylase (275 aa).

Proline 2 serves as the catalytic Schiff-base intermediate with DNA. Glutamate 3 (proton donor) is an active-site residue. The active-site Proton donor; for beta-elimination activity is lysine 58. Histidine 91, arginine 109, and arginine 154 together coordinate DNA. Residues 240 to 274 (AVYERAGLPCRVCGTPIRRLVQGQRATYFCPSCQK) form an FPG-type zinc finger. The active-site Proton donor; for delta-elimination activity is the arginine 264.

Belongs to the FPG family. In terms of assembly, monomer. It depends on Zn(2+) as a cofactor.

It carries out the reaction Hydrolysis of DNA containing ring-opened 7-methylguanine residues, releasing 2,6-diamino-4-hydroxy-5-(N-methyl)formamidopyrimidine.. It catalyses the reaction 2'-deoxyribonucleotide-(2'-deoxyribose 5'-phosphate)-2'-deoxyribonucleotide-DNA = a 3'-end 2'-deoxyribonucleotide-(2,3-dehydro-2,3-deoxyribose 5'-phosphate)-DNA + a 5'-end 5'-phospho-2'-deoxyribonucleoside-DNA + H(+). Involved in base excision repair of DNA damaged by oxidation or by mutagenic agents. Acts as a DNA glycosylase that recognizes and removes damaged bases. Has a preference for oxidized purines, such as 7,8-dihydro-8-oxoguanine (8-oxoG). Has AP (apurinic/apyrimidinic) lyase activity and introduces nicks in the DNA strand. Cleaves the DNA backbone by beta-delta elimination to generate a single-strand break at the site of the removed base with both 3'- and 5'-phosphates. The protein is Formamidopyrimidine-DNA glycosylase of Bordetella pertussis (strain Tohama I / ATCC BAA-589 / NCTC 13251).